A 1426-amino-acid chain; its full sequence is DNA-directed RNA polymerase subunit beta' (1426 aa).

Positions 71, 73, 86, and 89 each coordinate Zn(2+). 3 residues coordinate Mg(2+): aspartate 461, aspartate 463, and aspartate 465. Zn(2+)-binding residues include cysteine 814, cysteine 888, cysteine 895, and cysteine 898. The segment at 1392–1426 is disordered; the sequence is ADPIAAAESAIGLGGGEQPATSETGAGGSDPSEEG.

Belongs to the RNA polymerase beta' chain family. In terms of assembly, the RNAP catalytic core consists of 2 alpha, 1 beta, 1 beta' and 1 omega subunit. When a sigma factor is associated with the core the holoenzyme is formed, which can initiate transcription. Requires Mg(2+) as cofactor. It depends on Zn(2+) as a cofactor.

The catalysed reaction is RNA(n) + a ribonucleoside 5'-triphosphate = RNA(n+1) + diphosphate. DNA-dependent RNA polymerase catalyzes the transcription of DNA into RNA using the four ribonucleoside triphosphates as substrates. The sequence is that of DNA-directed RNA polymerase subunit beta' from Alkalilimnicola ehrlichii (strain ATCC BAA-1101 / DSM 17681 / MLHE-1).